Here is a 222-residue protein sequence, read N- to C-terminus: Transmembrane reductase CYB561D2 (222 aa).

Residues alanine 2–threonine 17 lie on the Cytoplasmic side of the membrane. In terms of domain architecture, Cytochrome b561 spans alanine 14–arginine 217. Residues alanine 18 to alanine 38 traverse the membrane as a helical segment. Topologically, residues arginine 39 to serine 46 are lumenal. The helical transmembrane segment at tryptophan 47–phenylalanine 67 threads the bilayer. Residue histidine 48 coordinates heme b. The Cytoplasmic portion of the chain corresponds to serine 68–cysteine 85. Residues histidine 86 and histidine 120 each coordinate heme b. A helical transmembrane segment spans residues histidine 86 to leucine 106. At histidine 107–glutamine 122 the chain is on the lumenal side. A helical transmembrane segment spans residues alanine 123–tyrosine 143. The Cytoplasmic segment spans residues proline 144 to serine 162. Histidine 159 provides a ligand contact to heme b. A helical transmembrane segment spans residues glycine 163–phenylalanine 183. Residues threonine 184–threonine 186 lie on the Lumenal side of the membrane. The chain crosses the membrane as a helical span at residues valine 187–methionine 207. Residues asparagine 208–proline 222 lie on the Cytoplasmic side of the membrane.

Heme b serves as cofactor. In terms of tissue distribution, highly expressed in the brain, lung, liver, and kidney. Moderately expressed in the heart, placenta, skeletal muscle, and pancreas.

It is found in the endoplasmic reticulum membrane. The protein resides in the cytoplasmic vesicle membrane. It catalyses the reaction monodehydro-L-ascorbate radical(out) + L-ascorbate(in) = monodehydro-L-ascorbate radical(in) + L-ascorbate(out). The enzyme catalyses Fe(3+)(out) + L-ascorbate(in) = monodehydro-L-ascorbate radical(in) + Fe(2+)(out) + H(+). In terms of biological role, transmembrane reductase that may use ascorbate as an electron donor in the cytoplasm and transfer electrons across endoplasmic reticulum membranes to reduce monodehydro-L-ascorbate radical and iron cations Fe(3+) in the lumen of that compartment. The protein is Transmembrane reductase CYB561D2 of Mus musculus (Mouse).